The sequence spans 230 residues: Terminal protein (230 aa).

The short motif at 222–230 (RRRKKRGKK) is the Nuclear localization signal element.

Its subcellular location is the host nucleus. It is found in the virion. DNA terminal protein is linked to the 5'-ends of both strands of the genome through a phosphodiester bond between the beta-hydroxyl group of a threonine residue and the 5'-phosphate of the terminal deoxyadenylate. This protein is essential for DNA replication and is involved in the priming of DNA elongation. This Streptococcus pneumoniae (Bacteriophage Cp-1) protein is Terminal protein (4).